We begin with the raw amino-acid sequence, 632 residues long: 1-deoxy-D-xylulose-5-phosphate synthase (632 aa).

Thiamine diphosphate is bound by residues histidine 79 and 120–122 (GHA). Aspartate 151 lines the Mg(2+) pocket. Residues 152–153 (GS), asparagine 180, phenylalanine 292, and glutamate 376 each bind thiamine diphosphate. Asparagine 180 is a binding site for Mg(2+).

The protein belongs to the transketolase family. DXPS subfamily. Homodimer. The cofactor is Mg(2+). It depends on thiamine diphosphate as a cofactor.

It carries out the reaction D-glyceraldehyde 3-phosphate + pyruvate + H(+) = 1-deoxy-D-xylulose 5-phosphate + CO2. It participates in metabolic intermediate biosynthesis; 1-deoxy-D-xylulose 5-phosphate biosynthesis; 1-deoxy-D-xylulose 5-phosphate from D-glyceraldehyde 3-phosphate and pyruvate: step 1/1. Functionally, catalyzes the acyloin condensation reaction between C atoms 2 and 3 of pyruvate and glyceraldehyde 3-phosphate to yield 1-deoxy-D-xylulose-5-phosphate (DXP). This Azobacteroides pseudotrichonymphae genomovar. CFP2 protein is 1-deoxy-D-xylulose-5-phosphate synthase.